A 321-amino-acid chain; its full sequence is uncharacterized protein (321 aa).

A disordered region spans residues 1-80 (MQGGQEVGRE…GELSGGWGEF (80 aa)).

This is an uncharacterized protein from Mus musculus (Mouse).